The primary structure comprises 221 residues: Ribose-5-phosphate isomerase A (221 aa).

Substrate is bound by residues 26–29 (TGST), 81–84 (DGAD), and 94–97 (KGGG). Residue glutamate 103 is the Proton acceptor of the active site. Substrate is bound at residue lysine 121.

It belongs to the ribose 5-phosphate isomerase family. In terms of assembly, homodimer.

The catalysed reaction is aldehydo-D-ribose 5-phosphate = D-ribulose 5-phosphate. It participates in carbohydrate degradation; pentose phosphate pathway; D-ribose 5-phosphate from D-ribulose 5-phosphate (non-oxidative stage): step 1/1. Catalyzes the reversible conversion of ribose-5-phosphate to ribulose 5-phosphate. The chain is Ribose-5-phosphate isomerase A from Bacillus mycoides (strain KBAB4) (Bacillus weihenstephanensis).